The chain runs to 436 residues: Nicotinate phosphoribosyltransferase (436 aa).

His-231 is subject to Phosphohistidine; by autocatalysis.

The protein belongs to the NAPRTase family. Transiently phosphorylated on a His residue during the reaction cycle. Phosphorylation strongly increases the affinity for substrates and increases the rate of nicotinate D-ribonucleotide production. Dephosphorylation regenerates the low-affinity form of the enzyme, leading to product release.

The catalysed reaction is nicotinate + 5-phospho-alpha-D-ribose 1-diphosphate + ATP + H2O = nicotinate beta-D-ribonucleotide + ADP + phosphate + diphosphate. The protein operates within cofactor biosynthesis; NAD(+) biosynthesis; nicotinate D-ribonucleotide from nicotinate: step 1/1. Its function is as follows. Catalyzes the synthesis of beta-nicotinate D-ribonucleotide from nicotinate and 5-phospho-D-ribose 1-phosphate at the expense of ATP. In Vibrio campbellii (strain ATCC BAA-1116), this protein is Nicotinate phosphoribosyltransferase.